Consider the following 305-residue polypeptide: Sulfate adenylyltransferase subunit 2 (305 aa).

Belongs to the PAPS reductase family. CysD subfamily. As to quaternary structure, heterodimer composed of CysD, the smaller subunit, and CysN.

It carries out the reaction sulfate + ATP + H(+) = adenosine 5'-phosphosulfate + diphosphate. It functions in the pathway sulfur metabolism; hydrogen sulfide biosynthesis; sulfite from sulfate: step 1/3. In terms of biological role, with CysN forms the ATP sulfurylase (ATPS) that catalyzes the adenylation of sulfate producing adenosine 5'-phosphosulfate (APS) and diphosphate, the first enzymatic step in sulfur assimilation pathway. APS synthesis involves the formation of a high-energy phosphoric-sulfuric acid anhydride bond driven by GTP hydrolysis by CysN coupled to ATP hydrolysis by CysD. This is Sulfate adenylyltransferase subunit 2 from Pseudomonas aeruginosa (strain LESB58).